A 76-amino-acid polypeptide reads, in one-letter code: ATP synthase subunit 9, mitochondrial (76 aa).

The next 2 membrane-spanning stretches (helical) occupy residues 14–34 (IATI…AALI) and 52–72 (ILGF…SFLL).

This sequence belongs to the ATPase C chain family. In terms of assembly, F-type ATPases have 2 components, CF(1) - the catalytic core - and CF(0) - the membrane proton channel. CF(1) has five subunits: alpha(3), beta(3), gamma(1), delta(1), epsilon(1). CF(0) has three main subunits: a, b and c.

The protein resides in the mitochondrion membrane. Mitochondrial membrane ATP synthase (F(1)F(0) ATP synthase or Complex V) produces ATP from ADP in the presence of a proton gradient across the membrane which is generated by electron transport complexes of the respiratory chain. F-type ATPases consist of two structural domains, F(1) - containing the extramembraneous catalytic core and F(0) - containing the membrane proton channel, linked together by a central stalk and a peripheral stalk. During catalysis, ATP synthesis in the catalytic domain of F(1) is coupled via a rotary mechanism of the central stalk subunits to proton translocation. Part of the complex F(0) domain. A homomeric c-ring of probably 10 subunits is part of the complex rotary element. In Wickerhamomyces canadensis (Yeast), this protein is ATP synthase subunit 9, mitochondrial (ATP9).